A 386-amino-acid chain; its full sequence is Ribonucleoside-diphosphate reductase subunit M2 (386 aa).

Ser20 carries the post-translational modification Phosphoserine. Phosphothreonine is present on Thr33. The Cy signature appears at 49–51 (RRI). Fe cation-binding residues include Asp139, Glu170, and His173. Tyr177 is a catalytic residue. The Fe cation site is built by Glu233, Glu267, and His270.

Belongs to the ribonucleoside diphosphate reductase small chain family. In terms of assembly, heterodimer of a large and a small subunit. Interacts (via Cy motif and when phosphorylated at Thr-33) with CCNF; the interaction occurs exclusively in G2 and early M. Fe cation is required as a cofactor. Post-translationally, phosphorylation on Ser-20 relieves the inhibitory effect on Wnt signaling. Phosphorylated on Thr-33 by CDK1 and CDK2; predominantly in G2 and M phase. Ubiquitinated by the SCF(CCNF) E3 ubiquitin-protein ligase complex; leading to its degradation by the proteasome.

Its subcellular location is the cytoplasm. The protein localises to the nucleus. The catalysed reaction is a 2'-deoxyribonucleoside 5'-diphosphate + [thioredoxin]-disulfide + H2O = a ribonucleoside 5'-diphosphate + [thioredoxin]-dithiol. In terms of biological role, provides the precursors necessary for DNA synthesis. Catalyzes the biosynthesis of deoxyribonucleotides from the corresponding ribonucleotides. Inhibits Wnt signaling. The chain is Ribonucleoside-diphosphate reductase subunit M2 (RRM2) from Mesocricetus auratus (Golden hamster).